The chain runs to 335 residues: Auxin-responsive protein IAA6 (335 aa).

An EAR-like (transcriptional repression) motif is present at residues 51–55 (LKLGL). Disordered regions lie at residues 81 to 102 (LSFF…GAKR), 143 to 180 (KKGC…VGWP), and 188 to 207 (NLAS…DNAN). The 105-residue stretch at 217-321 (NPLVKINMDG…TAKRLRVLRS (105 aa)) folds into the PB1 domain.

Belongs to the Aux/IAA family. In terms of assembly, homodimers and heterodimers. Highly expressed in roots. Expressed in shoots and flowers.

It localises to the nucleus. Its function is as follows. Aux/IAA proteins are short-lived transcriptional factors that function as repressors of early auxin response genes at low auxin concentrations. This is Auxin-responsive protein IAA6 (IAA6) from Oryza sativa subsp. japonica (Rice).